We begin with the raw amino-acid sequence, 512 residues long: SNF1-related protein kinase catalytic subunit alpha KIN11 (512 aa).

Positions 20–272 constitute a Protein kinase domain; it reads YKLGKTLGIG…IPEIRQHRWF (253 aa). Residues 26 to 34 and Lys-49 each bind ATP; that span reads LGIGSFGKV. Catalysis depends on Asp-143, which acts as the Proton acceptor. Ser-165 bears the Phosphoserine mark. Thr-176 carries the post-translational modification Phosphothreonine; by GRIK1 or GRIK2. The segment at 291-391 is auto-inhibitory domain (AID); it reads AKKINEEIVQ…GARSQVPVDR (101 aa). Residues 293-333 form the UBA domain; the sequence is KINEEIVQEVVNMGFDRNQVLESLRNRTQNDATVTYYLLLD. Residues 295 to 512 form a regulatory domain (RD) region; the sequence is NEEIVQEVVN…AAFLTELRVI (218 aa). A PPI region spans residues 392–512; it reads KWALGLQSHA…AAFLTELRVI (121 aa). Positions 399 to 512 are interaction with PAD1 and SKP1; it reads SHAHPREIMN…AAFLTELRVI (114 aa). One can recognise a KA1 domain in the interval 463–511; it reads AMTSPTVIKFELQLYKAREEKYLLDIQRVNGPQFLFLDLCAAFLTELRV.

It belongs to the protein kinase superfamily. CAMK Ser/Thr protein kinase family. SNF1 subfamily. In terms of assembly, subunit of a probable heterotrimeric complex consisting of an alpha catalytic (KIN10 or KIN11) subunit, and a beta (KINB) and a gamma (KING or SNF4) non-catalytic regulatory subunits. Interacts with KINB2, KINB3, SNF4 and probably with KINB1 and KING1. Interacts with SKP1/ASK1, PAD1 and the N-terminus of PRL1. Potential subunit of a SCF ubiquitin ligase complex consisting of a SNF1-related protein kinase, SKP1 and CUL1. The association of the SCF complex with the proteasome may be mediated by PAD1 and seems to be inhibited by the interaction with PRL1. Interacts with DSP4. Interacts with the begomovirus AL2 protein and the curtovirus L2 protein. Interacts with ATAF1. Interacts with CIPK14. Interacts with FLZ proteins through their FLZ-type zinc finger domains. Interacts with GEBP/STKR1. Interacts with REM4.1 and REM4.2. Interacts with ADK2. Interacts with IDD8. Interacts with FLZ3, FLZ9, TCP3, TCP13, HB21/ZHD3 and HB23/ZHD10. Interacts with WRI1. Interacts with IPK2b. Interacts with FLZ6 and FLZ10. In terms of processing, sumoylated by SIZ1. Phosphorylated at Thr-176 under submergence. Autophosphorylated. Phosphorylated at Thr-176 by GRIK1/SNAK2 and GRIK2/SNAK1. Expressed in roots, shoots, flower buds, flowers, siliques and leaves. Restrictly expressed to the base of the leaf, the vascular tissue, and the hydathodes.

It localises to the plastid. The protein localises to the chloroplast. The protein resides in the cytoplasm. It is found in the endoplasmic reticulum. It carries out the reaction L-seryl-[protein] + ATP = O-phospho-L-seryl-[protein] + ADP + H(+). The catalysed reaction is L-threonyl-[protein] + ATP = O-phospho-L-threonyl-[protein] + ADP + H(+). Inactivated by the begomovirus AL2 protein or the curtovirus L2 protein. Activated by phosphorylation at Thr-176 by GRIK1/SNAK2 and GRIK2/SNAK1. Inhibited by trehalose-6-phosphate. Its function is as follows. Catalytic subunit of the probable trimeric SNF1-related protein kinase (SnRK) complex, a central regulator of cellular energy homeostasis, which, in response to seemingly unrelated darkness, sugar and stress conditions, activates energy-producing pathways and inhibits energy-consuming processes. May play a role in a signal transduction cascade regulating gene expression and carbohydrate metabolism in higher plants. The SnRK complex may also be involved in the regulation of fatty acid synthesis by phosphorylation of acetyl-CoA carboxylase and in assimilation of nitrogen by phosphorylating nitrate reductase. In vitro, KIN11 exhibits kinase activity on sucrose phosphate synthase and the kinase activity is inhibited by PRL1. May be a subunit of a SCF ubiquitin ligase complex and thus be involved in proteasomal ubiquitination. Involved in innate antiviral defenses. Phosphorylates REM4.1 in vitro. Phosphorylates ADK2 in vitro. The protein is SNF1-related protein kinase catalytic subunit alpha KIN11 of Arabidopsis thaliana (Mouse-ear cress).